Here is a 361-residue protein sequence, read N- to C-terminus: UPF0283 membrane protein mlr0776 (361 aa).

Positions 1–33 (MTAPRKPAAFRIEPEAAPTQETPKARQAELSRK) are disordered. Residues 23 to 32 (PKARQAELSR) are compositionally biased toward basic and acidic residues. The next 2 membrane-spanning stretches (helical) occupy residues 73–93 (LFGS…VGLW) and 108–128 (LGWL…VILI).

It belongs to the UPF0283 family.

It localises to the cell inner membrane. The polypeptide is UPF0283 membrane protein mlr0776 (Mesorhizobium japonicum (strain LMG 29417 / CECT 9101 / MAFF 303099) (Mesorhizobium loti (strain MAFF 303099))).